The sequence spans 214 residues: Large ribosomal subunit protein uL16 (214 aa).

Arg-32 carries the post-translational modification Citrulline. Lys-175 participates in a covalent cross-link: Glycyl lysine isopeptide (Lys-Gly) (interchain with G-Cter in SUMO2). A Glycyl lysine isopeptide (Lys-Gly) (interchain with G-Cter in ubiquitin) cross-link involves residue Lys-188.

The protein belongs to the universal ribosomal protein uL16 family. In terms of assembly, component of the large ribosomal subunit. Mature ribosomes consist of a small (40S) and a large (60S) subunit. The 40S subunit contains about 33 different proteins and 1 molecule of RNA (18S). The 60S subunit contains about 49 different proteins and 3 molecules of RNA (28S, 5.8S and 5S). In terms of processing, citrullinated by PADI4. Ufmylated by UFL1.

The protein resides in the cytoplasm. Its function is as follows. Component of the large ribosomal subunit. Plays a role in the formation of actively translating ribosomes. May play a role in the embryonic brain development. This chain is Large ribosomal subunit protein uL16, found in Homo sapiens (Human).